The sequence spans 989 residues: Voltage-gated delayed rectifier potassium channel KCNH1 (989 aa).

Topologically, residues 1–220 (MTMAGGRRGL…LHYCVFKTTW (220 aa)) are cytoplasmic. The PAS domain occupies 14–94 (QNTFLENIVR…QTFENYEMNS (81 aa)). The PAC domain maps to 93 to 145 (NSFEILMYKKNRTPVWFFVKIAPIRNEQDKVVLFLCTFSDITAFKQPIEDDSC). Positions 151–162 (FARLTRALTSSR) are required for phosphatidylinositol bisphosphate binding. A helical transmembrane segment spans residues 221–241 (DWIILILTFYTAILVPYNVSF). Residues 242 to 248 (KTRQNNV) are Extracellular-facing. A helical membrane pass occupies residues 249–269 (AWLVVDSIVDVIFLVDIVLNF). Residues 270–290 (HTTFVGPAGEVISDPKLIRMN) are Cytoplasmic-facing. The helical transmembrane segment at 291 to 309 (YLKTWFVIDLLSCLPYDVI) threads the bilayer. The Extracellular segment spans residues 310 to 345 (NAFENVDEVSAFMGDPGKIGFADQIPPPLEGRESQG). The chain crosses the membrane as a helical; Voltage-sensor span at residues 346 to 368 (ISSLFSSLKVVRLLRLGRVARKL). Residues 369–377 (DHYIEYGAA) are Cytoplasmic-facing. A helical transmembrane segment spans residues 378-399 (VLVLLVCVFGLAAHWMACIWYS). Topologically, residues 400–448 (IGDYEIFDEDTKTIRNNSWLYQLAMDIGTPYQFNGSGSGKWEGGPSKNS) are extracellular. Residues N415 and N433 are each glycosylated (N-linked (GlcNAc...) asparagine). The segment at residues 449 to 470 (VYISSLYFTMTSLTSVGFGNIA) is an intramembrane region (pore-forming). The Selectivity filter signature appears at 463–468 (SVGFGN). The Extracellular segment spans residues 471-477 (PSTDIEK). Residues 478 to 498 (IFAVAIMMIGSLLYATIFGNV) form a helical membrane-spanning segment. Residues 499–989 (TTIFQQMYAN…ESERDIFGAS (491 aa)) lie on the Cytoplasmic side of the membrane. Residues 673-770 (KRDALQKVLE…LDDLDVEKGN (98 aa)) form a calmodulin-binding region. The tract at residues 699 to 701 (YNL) is interaction with cyclic nucleotide-binding pocket. Positions 855-879 (KAESMETLPERTKASGEATLKKTDS) are enriched in basic and acidic residues. Disordered stretches follow at residues 855-886 (KAES…GITK) and 962-989 (RSSQ…FGAS). Positions 924–964 (ATVLEVRHELKEDIKALNAKMTNIEKQLSEILRILTSRRSS) are CAD (involved in subunit assembly). Phosphoserine occurs at positions 974, 978, and 981. Basic and acidic residues predominate over residues 980–989 (ESERDIFGAS).

It belongs to the potassium channel family. H (Eag) (TC 1.A.1.20) subfamily. Kv10.1/KCNH1 sub-subfamily. Homomultimer. The potassium channel is composed of a homo- or heterotetrameric complex of pore-forming alpha subunits that can associate with modulating beta subunits. Heteromultimer with KCNH5/EAG2. Interacts with ALG10B. Interacts with RABEP1. Interacts (via C-terminus) with CTTN. Interacts (via C-terminal cytoplasmic region) with Ca(2+)-bound calmodulin. Interacts with the spider kappa-theraphotoxin-Aa1a and mu/kappa-theraphotoxin-Ap1a. Post-translationally, channel activity is regulated via tyrosine phosphorylation/dephosphorylation by SRC and PTPN6. As to expression, highly expressed in brain and in myoblasts at the onset of fusion, but not in other tissues. Detected in HeLa (cervical carcinoma), SH-SY5Y (neuroblastoma) and MCF-7 (epithelial tumor) cells, but not in normal epithelial cells.

The protein resides in the cell membrane. The protein localises to the nucleus inner membrane. Its subcellular location is the cell projection. It is found in the dendrite. It localises to the axon. The protein resides in the presynaptic cell membrane. The protein localises to the perikaryon. Its subcellular location is the postsynaptic density membrane. It is found in the early endosome membrane. The catalysed reaction is K(+)(in) = K(+)(out). Channel activity is inhibited by interaction with Ca(2+)-bound calmodulin. Interaction of a single pore-forming alpha subunit with a calmodulin chain is sufficient to promote channel closure. Channel activity is not regulated by cyclic nucleotides. Channel activity is inhibited by binding intracellular phosphatidylinositol-3,5-bisphosphate and phosphatidylinositol-4,5-bisphosphate (PIP2), but is not inhibited by phosphatidylinositol 4-phosphate. Inhibited by the spider kappa-theraphotoxin-Aa1a and mu/kappa-theraphotoxin-Ap1a. Functionally, pore-forming (alpha) subunit of a voltage-gated delayed rectifier potassium channel that mediates outward-rectifying potassium currents which, on depolarization, reaches a steady-state level and do not inactivate. The activation kinetics depend on the prepulse potential and external divalent cation concentration. With negative prepulses, the current activation is delayed and slowed down several fold, whereas more positive prepulses speed up activation. The time course of activation is biphasic with a fast and a slowly activating current component. Activates at more positive membrane potentials and exhibit a steeper activation curve. Channel properties are modulated by subunit assembly. Mediates IK(NI) current in myoblasts. Involved in the regulation of cell proliferation and differentiation, in particular adipogenic and osteogenic differentiation in bone marrow-derived mesenchymal stem cells (MSCs). In Homo sapiens (Human), this protein is Voltage-gated delayed rectifier potassium channel KCNH1.